A 117-amino-acid chain; its full sequence is MLMLSIMATIIFIITIVVMMLATLLSKKTLLDREKCSPFECGFDPMNSSRLPFALRFFLIAIIFLIFDVEIALLLPMVMIIKTSNLMNWTMTSFFFIFILLIGLYHEWNQGALEWNN.

3 helical membrane passes run 1-21 (MLML…VMML), 57-77 (FFLI…LLPM), and 86-106 (LMNW…GLYH).

The protein belongs to the complex I subunit 3 family.

Its subcellular location is the mitochondrion membrane. The catalysed reaction is a ubiquinone + NADH + 5 H(+)(in) = a ubiquinol + NAD(+) + 4 H(+)(out). In terms of biological role, core subunit of the mitochondrial membrane respiratory chain NADH dehydrogenase (Complex I) that is believed to belong to the minimal assembly required for catalysis. Complex I functions in the transfer of electrons from NADH to the respiratory chain. The immediate electron acceptor for the enzyme is believed to be ubiquinone. This chain is NADH-ubiquinone oxidoreductase chain 3 (ND3), found in Anopheles quadrimaculatus (Common malaria mosquito).